The following is a 141-amino-acid chain: MSIVIGADAAGLRLKEVVKDFLEKENFHLVDVTAEGQDFVDVTLAVAAEVNKEEQNLGIVIDAYGAGPFMVATKIKGMVAAEVSDERSAYMTRGHNNSRMITMGAQLVGDELAKNIAKGFVNGKYDGGRHQIRVDMLNKMG.

Belongs to the LacAB/RpiB family. As to quaternary structure, heteromultimeric protein consisting of LacA and LacB.

It carries out the reaction aldehydo-D-galactose 6-phosphate = keto-D-tagatose 6-phosphate. It functions in the pathway carbohydrate metabolism; D-galactose 6-phosphate degradation; D-tagatose 6-phosphate from D-galactose 6-phosphate: step 1/1. The polypeptide is Galactose-6-phosphate isomerase subunit LacA (Streptococcus pneumoniae serotype 2 (strain D39 / NCTC 7466)).